The primary structure comprises 119 residues: Large ribosomal subunit protein uL24 (119 aa).

The protein belongs to the universal ribosomal protein uL24 family. In terms of assembly, part of the 50S ribosomal subunit.

Functionally, one of two assembly initiator proteins, it binds directly to the 5'-end of the 23S rRNA, where it nucleates assembly of the 50S subunit. In terms of biological role, one of the proteins that surrounds the polypeptide exit tunnel on the outside of the subunit. The protein is Large ribosomal subunit protein uL24 of Leifsonia xyli subsp. xyli (strain CTCB07).